Consider the following 297-residue polypeptide: GTPase Era (297 aa).

An Era-type G domain is found at 7-174 (RSGFVSIIGR…VEVVHGFIPA (168 aa)). The G1 stretch occupies residues 15–22 (GRPNVGKS). GTP is bound at residue 15-22 (GRPNVGKS). Positions 41–45 (QTTRN) are G2. Residues 62 to 65 (DTPG) are G3. Residues 62 to 66 (DTPGI) and 124 to 127 (NKID) each bind GTP. A G4 region spans residues 124–127 (NKID). Residues 153–155 (VSA) form a G5 region. Residues 205-282 (THDEVPYSVA…FLELFVRVSK (78 aa)) enclose the KH type-2 domain.

Belongs to the TRAFAC class TrmE-Era-EngA-EngB-Septin-like GTPase superfamily. Era GTPase family. In terms of assembly, monomer.

Its subcellular location is the cytoplasm. It localises to the cell inner membrane. An essential GTPase that binds both GDP and GTP, with rapid nucleotide exchange. Plays a role in 16S rRNA processing and 30S ribosomal subunit biogenesis and possibly also in cell cycle regulation and energy metabolism. The sequence is that of GTPase Era from Geotalea uraniireducens (strain Rf4) (Geobacter uraniireducens).